The chain runs to 160 residues: Cytochrome b6-f complex subunit 4 (160 aa).

4 helical membrane-spanning segments follow: residues 36–56 (LLYIFPVVILGTIACTVGLAV), 68–88 (PFATPLEILPEWYFFPVFQIL), 95–115 (FFGVLLMTSVPFGLLTVPFLE), and 131–151 (SVFLIGTVISLWLGFGAVLPI).

Belongs to the cytochrome b family. PetD subfamily. The 4 large subunits of the cytochrome b6-f complex are cytochrome b6, subunit IV (17 kDa polypeptide, petD), cytochrome f and the Rieske protein, while the 4 small subunits are petG, petL, petM and petN. The complex functions as a dimer.

It localises to the plastid. Its subcellular location is the chloroplast thylakoid membrane. In terms of biological role, component of the cytochrome b6-f complex, which mediates electron transfer between photosystem II (PSII) and photosystem I (PSI), cyclic electron flow around PSI, and state transitions. The sequence is that of Cytochrome b6-f complex subunit 4 from Welwitschia mirabilis (Tree tumbo).